Reading from the N-terminus, the 188-residue chain is Acireductone dioxygenase (188 aa).

Positions 97, 99, 103, and 141 each coordinate Fe(2+). Ni(2+) is bound by residues histidine 97, histidine 99, glutamate 103, and histidine 141.

This sequence belongs to the acireductone dioxygenase (ARD) family. In terms of assembly, monomer. Fe(2+) serves as cofactor. Ni(2+) is required as a cofactor.

The enzyme catalyses 1,2-dihydroxy-5-(methylsulfanyl)pent-1-en-3-one + O2 = 3-(methylsulfanyl)propanoate + CO + formate + 2 H(+). The catalysed reaction is 1,2-dihydroxy-5-(methylsulfanyl)pent-1-en-3-one + O2 = 4-methylsulfanyl-2-oxobutanoate + formate + 2 H(+). The protein operates within amino-acid biosynthesis; L-methionine biosynthesis via salvage pathway; L-methionine from S-methyl-5-thio-alpha-D-ribose 1-phosphate: step 5/6. Catalyzes 2 different reactions between oxygen and the acireductone 1,2-dihydroxy-3-keto-5-methylthiopentene (DHK-MTPene) depending upon the metal bound in the active site. Fe-containing acireductone dioxygenase (Fe-ARD) produces formate and 2-keto-4-methylthiobutyrate (KMTB), the alpha-ketoacid precursor of methionine in the methionine recycle pathway. Ni-containing acireductone dioxygenase (Ni-ARD) produces methylthiopropionate, carbon monoxide and formate, and does not lie on the methionine recycle pathway. This chain is Acireductone dioxygenase, found in Gluconobacter oxydans (strain 621H) (Gluconobacter suboxydans).